Here is a 478-residue protein sequence, read N- to C-terminus: Ribosomal RNA small subunit methyltransferase F (478 aa).

S-adenosyl-L-methionine is bound by residues 125-131, glutamate 149, aspartate 176, and aspartate 194; that span reads AAAPGSK. The active-site Nucleophile is cysteine 247.

Belongs to the class I-like SAM-binding methyltransferase superfamily. RsmB/NOP family.

The protein resides in the cytoplasm. It catalyses the reaction cytidine(1407) in 16S rRNA + S-adenosyl-L-methionine = 5-methylcytidine(1407) in 16S rRNA + S-adenosyl-L-homocysteine + H(+). In terms of biological role, specifically methylates the cytosine at position 1407 (m5C1407) of 16S rRNA. This Serratia proteamaculans (strain 568) protein is Ribosomal RNA small subunit methyltransferase F.